A 147-amino-acid polypeptide reads, in one-letter code: Ribosomal RNA large subunit methyltransferase H (147 aa).

S-adenosyl-L-methionine contacts are provided by residues leucine 66, glycine 95, and 114 to 119 (LSELTF).

It belongs to the RNA methyltransferase RlmH family. Homodimer.

It localises to the cytoplasm. The enzyme catalyses pseudouridine(1915) in 23S rRNA + S-adenosyl-L-methionine = N(3)-methylpseudouridine(1915) in 23S rRNA + S-adenosyl-L-homocysteine + H(+). Functionally, specifically methylates the pseudouridine at position 1915 (m3Psi1915) in 23S rRNA. The polypeptide is Ribosomal RNA large subunit methyltransferase H (Synechococcus sp. (strain RCC307)).